Here is a 42-residue protein sequence, read N- to C-terminus: Beta-2-microglobulin (42 aa).

The Ig-like C1-type domain occupies 5 to 42 (PKIQVYSRHPAZBGKPBFLBCYVSGFHPXZIZIBLLKB).

As to quaternary structure, heterodimer of an alpha chain and a beta chain. Beta-2-microglobulin is the beta-chain of major histocompatibility complex class I molecules.

The protein localises to the secreted. Functionally, component of the class I major histocompatibility complex (MHC). Involved in the presentation of peptide antigens to the immune system. The protein is Beta-2-microglobulin (B2M) of Canis lupus familiaris (Dog).